The primary structure comprises 508 residues: Lysine--tRNA ligase (508 aa).

Mg(2+)-binding residues include Glu-418 and Glu-425.

Belongs to the class-II aminoacyl-tRNA synthetase family. In terms of assembly, homodimer. The cofactor is Mg(2+).

The protein resides in the cytoplasm. The catalysed reaction is tRNA(Lys) + L-lysine + ATP = L-lysyl-tRNA(Lys) + AMP + diphosphate. This Burkholderia multivorans (strain ATCC 17616 / 249) protein is Lysine--tRNA ligase.